The primary structure comprises 235 residues: Octanoyltransferase (235 aa).

Residues 30-214 (NELEDTLLLL…YFGKVFGAKF (185 aa)) enclose the BPL/LPL catalytic domain. Residues 75–82 (RGGDVTYH), 144–146 (AIG), and 157–159 (GFA) contribute to the substrate site. Cys175 acts as the Acyl-thioester intermediate in catalysis.

The protein belongs to the LipB family.

It localises to the cytoplasm. It carries out the reaction octanoyl-[ACP] + L-lysyl-[protein] = N(6)-octanoyl-L-lysyl-[protein] + holo-[ACP] + H(+). The protein operates within protein modification; protein lipoylation via endogenous pathway; protein N(6)-(lipoyl)lysine from octanoyl-[acyl-carrier-protein]: step 1/2. Functionally, catalyzes the transfer of endogenously produced octanoic acid from octanoyl-acyl-carrier-protein onto the lipoyl domains of lipoate-dependent enzymes. Lipoyl-ACP can also act as a substrate although octanoyl-ACP is likely to be the physiological substrate. In Caldicellulosiruptor saccharolyticus (strain ATCC 43494 / DSM 8903 / Tp8T 6331), this protein is Octanoyltransferase.